A 1055-amino-acid chain; its full sequence is Sodium/potassium exporting P-type ATPase 1 (1055 aa).

Residues 1–73 (MTPSIGYVDE…GADEKISISK (73 aa)) are Cytoplasmic-facing. Residues 74-94 (ILAHQIFNAMVLVLIISLIIA) form a helical membrane-spanning segment. Residues 95–99 (LAIKD) lie on the Extracellular side of the membrane. A helical transmembrane segment spans residues 100-120 (WISGGVIGFVVFINIFVGFIQ). The Cytoplasmic portion of the chain corresponds to 121–298 (ELKAEKTMGS…TNVGTPLQRK (178 aa)). A helical membrane pass occupies residues 299–319 (LSWLAILLFWVAVLFAIVVMA). Topologically, residues 320–328 (SQEMRVNRN) are extracellular. Residues 329–349 (VAIYAICVALSMIPSSLVVVL) form a helical membrane-spanning segment. The Cytoplasmic segment spans residues 350 to 789 (TITMAIGAQV…RMSSNIQKFV (440 aa)). Asp385 acts as the 4-aspartylphosphate intermediate in catalysis. Mg(2+) contacts are provided by Asp385 and Thr387. Thr387, Glu491, Lys544, Arg586, Thr646, Gly647, Asp648, Arg705, and Lys711 together coordinate ATP. Asp730 is a Mg(2+) binding site. Asn733 contributes to the ATP binding site. The chain crosses the membrane as a helical span at residues 790 to 810 (LQLLAENVAQALYLMIGLAFI). Topologically, residues 811–816 (DKSGYS) are extracellular. Residues 817–837 (VFPLSPVEVLWIIVVTSCFPA) traverse the membrane as a helical segment. Topologically, residues 838–866 (MGLGQEKASHDILEQPPNATIFTWEVIID) are cytoplasmic. Residues 867–887 (MIAYGFWMAVCCLVCFVCIVY) traverse the membrane as a helical segment. Residues 888–913 (GKGDGSLGENCNEGSDTGCNLVFRGR) lie on the Extracellular side of the membrane. The chain crosses the membrane as a helical span at residues 914–934 (SGAFAAFTWCALLLAWECIHL). At 935–962 (RLSFFKMRPELENPWWKQLAIDLWDNQF) the chain is on the cytoplasmic side. Residues 963–983 (LFWSVMGAIVSVFPVVYIPVI) traverse the membrane as a helical segment. Residues 984 to 990 (NNKVFLH) lie on the Extracellular side of the membrane. The chain crosses the membrane as a helical span at residues 991–1011 (APIGYEWGLAVAFTILFLIGA). Over 1012–1055 (EGWKWFKRVYYRKSNANNPEYDLERNDPFKEYSSFSKSNTMEIV) the chain is Cytoplasmic.

Belongs to the cation transport ATPase (P-type) (TC 3.A.3) family. Type IID subfamily. Mg(2+) is required as a cofactor. Post-translationally, the active site is phosphorylated in presence of sodium or potassium and in conditions of higher pH. Not phosphorylated in presence of calcium ions.

It is found in the cell membrane. The catalysed reaction is Na(+)(in) + ATP + H2O = Na(+)(out) + ADP + phosphate + H(+). It catalyses the reaction K(+)(in) + ATP + H2O = K(+)(out) + ADP + phosphate + H(+). Functionally, catalyzes the hydrolysis of ATP coupled with the export of sodium and potassium from the cell. May be an inefficient potassium exporter. May transport other cations such as lithium. Sodium/potassium efflux ATPases are involved in salt tolerance and maintaining the membrane potential across the plasma membrane in high salinity (Na+) or alkaline (K+) environments. In Schwanniomyces occidentalis (Yeast), this protein is Sodium/potassium exporting P-type ATPase 1.